The primary structure comprises 510 residues: Hexose carrier protein HEX6 (510 aa).

The Cytoplasmic portion of the chain corresponds to 1–22 (MAAGLAITSEGGQYNGRMTSFV). 12 consecutive transmembrane segments (helical) span residues 23 to 43 (ALSC…IGVS), 83 to 103 (SFTS…SSVT), 118 to 128 (VFLAXAALGGA), 140 to 160 (VLLG…LSEM), 169 to 189 (INNG…LINY), 202 to 222 (ISLA…LFLP), 284 to 304 (LVMA…VIAF), 325 to 345 (IVTG…VDKL), 349 to 369 (ALFI…GSIM), 382 to 402 (GYAY…GWSW), 428 to 448 (AVSF…LCHF), and 451 to 471 (GIFF…HFLL). Residues 472-510 (PETKKVPIEKMDIVWRDHWFWKKIIGEEAAEENNKMEAA) lie on the Cytoplasmic side of the membrane.

Belongs to the major facilitator superfamily. Sugar transporter (TC 2.A.1.1) family.

Its subcellular location is the membrane. In terms of biological role, active uptake of hexoses. Probable glucose/hydrogen symport. The protein is Hexose carrier protein HEX6 (HEX6) of Ricinus communis (Castor bean).